A 243-amino-acid chain; its full sequence is UPF0246 protein SAG2081 (243 aa).

This sequence belongs to the UPF0246 family.

This Streptococcus agalactiae serotype V (strain ATCC BAA-611 / 2603 V/R) protein is UPF0246 protein SAG2081.